Consider the following 131-residue polypeptide: Small ribosomal subunit protein uS8 (131 aa).

It belongs to the universal ribosomal protein uS8 family. In terms of assembly, part of the 30S ribosomal subunit. Contacts proteins S5 and S12.

In terms of biological role, one of the primary rRNA binding proteins, it binds directly to 16S rRNA central domain where it helps coordinate assembly of the platform of the 30S subunit. This chain is Small ribosomal subunit protein uS8, found in Chlorobium limicola (strain DSM 245 / NBRC 103803 / 6330).